We begin with the raw amino-acid sequence, 159 residues long: Phosphopantetheine adenylyltransferase (159 aa).

It belongs to the eukaryotic CoaD family.

Its subcellular location is the cytoplasm. It carries out the reaction (R)-4'-phosphopantetheine + ATP + H(+) = 3'-dephospho-CoA + diphosphate. Its pathway is cofactor biosynthesis; coenzyme A biosynthesis. In terms of biological role, reversibly transfers an adenylyl group from ATP to 4'-phosphopantetheine, yielding dephospho-CoA (dPCoA) and pyrophosphate. This chain is Phosphopantetheine adenylyltransferase, found in Thermococcus gammatolerans (strain DSM 15229 / JCM 11827 / EJ3).